A 125-amino-acid chain; its full sequence is Histone H2B (125 aa).

Positions 1–32 (MAPKVRAAKKGEKRVGKAKSGTAETAKRRRGK) are disordered. O-linked (GlcNAc) serine glycosylation is present at Ser112. Lys120 is covalently cross-linked (Glycyl lysine isopeptide (Lys-Gly) (interchain with G-Cter in ubiquitin)).

This sequence belongs to the histone H2B family. In terms of assembly, the nucleosome is a histone octamer containing two molecules each of H2A, H2B, H3 and H4 assembled in one H3-H4 heterotetramer and two H2A-H2B heterodimers. The octamer wraps approximately 147 bp of DNA. Post-translationally, monoubiquitination of Lys-120 gives a specific tag for epigenetic transcriptional activation and is also prerequisite for histone H3 'Lys-4' and 'Lys-79' methylation. GlcNAcylation at Ser-112 promotes monoubiquitination of Lys-120. It fluctuates in response to extracellular glucose, and associates with transcribed genes.

Its subcellular location is the nucleus. The protein resides in the chromosome. Functionally, core component of nucleosome. Nucleosomes wrap and compact DNA into chromatin, limiting DNA accessibility to the cellular machineries which require DNA as a template. Histones thereby play a central role in transcription regulation, DNA repair, DNA replication and chromosomal stability. DNA accessibility is regulated via a complex set of post-translational modifications of histones, also called histone code, and nucleosome remodeling. The chain is Histone H2B from Acropora formosa (Staghorn coral).